A 330-amino-acid chain; its full sequence is tRNA uridine(34) hydroxylase (330 aa).

Residues 123-217 (SDPEVILVDT…YLEEVKQEES (95 aa)) enclose the Rhodanese domain. Cys177 functions as the Cysteine persulfide intermediate in the catalytic mechanism.

Belongs to the TrhO family.

It carries out the reaction uridine(34) in tRNA + AH2 + O2 = 5-hydroxyuridine(34) in tRNA + A + H2O. In terms of biological role, catalyzes oxygen-dependent 5-hydroxyuridine (ho5U) modification at position 34 in tRNAs. The sequence is that of tRNA uridine(34) hydroxylase from Shewanella sp. (strain ANA-3).